Reading from the N-terminus, the 1400-residue chain is ABC transporter G family member 30 (1400 aa).

Asparagine 116 carries an N-linked (GlcNAc...) asparagine glycan. The ABC transporter 1 domain occupies 141-414 (LLSEFICSKK…FEEFGFKCPE (274 aa)). 174–181 (GPPGCGKT) provides a ligand contact to ATP. The N-linked (GlcNAc...) asparagine glycan is linked to asparagine 472. In terms of domain architecture, ABC transmembrane type-2 1 spans 492–704 (EMLKACSRRE…AEIGLTANEF (213 aa)). 7 helical membrane-spanning segments follow: residues 510–530 (FIYL…MTVF), 553–573 (LFRL…RLGV), 582–602 (FYPA…LSVL), 628–648 (FLIL…IAAI), 652–672 (IIAS…FGGF), 679–699 (MPAW…EIGL), and 738–758 (TAFG…VLAL). In terms of domain architecture, ABC transporter 2 spans 808–1053 (VTFQNVQYYI…VIEYFESFSG (246 aa)). Residue 845-852 (GVSGAGKT) coordinates ATP. Residues asparagine 899 and asparagine 1040 are each glycosylated (N-linked (GlcNAc...) asparagine). The 215-residue stretch at 1125–1339 (VQLKACLWKQ…VLEGLLSSQY (215 aa)) folds into the ABC transmembrane type-2 2 domain. The next 7 helical transmembrane spans lie at 1144–1164 (HNIT…LLFW), 1179–1199 (IFGS…AAVI), 1228–1248 (VLIE…IVYP), 1263–1283 (LYSI…MVAL), 1289–1309 (MAVT…GFVI), 1317–1337 (WWIW…LLSS), and 1372–1392 (VVAF…AFFM).

This sequence belongs to the ABC transporter superfamily. ABCG family. PDR (TC 3.A.1.205) subfamily. In terms of tissue distribution, confined to roots. In seeds, mainly expressed in the embryo and, to a lesser extent, in the endosperm.

The protein resides in the cell membrane. The enzyme catalyses abscisate(out) + ATP + H2O = abscisate(in) + ADP + phosphate + H(+). In terms of biological role, together with ABCG40, import into the embryo the abscisic acid (ABA) delivered from the endosperm via ABCG25 and ABCG31-mediated export to suppress radicle extension and subsequent embryonic growth. Involved in root secretion of phytochemicals (phenolics and sugars) which regulate soil microbiota, influencing both fungal and bacterial communities. May be a general defense protein. The chain is ABC transporter G family member 30 from Arabidopsis thaliana (Mouse-ear cress).